The chain runs to 226 residues: Probable functional amyloid protease FapD (226 aa).

The first 18 residues, 1–18 (MRRATLCLLLLLAGPSWA), serve as a signal peptide directing secretion. The region spanning 50 to 180 (QKTDFSCGAA…AGWNGIVFAV (131 aa)) is the Peptidase C39 domain. C56 is an active-site residue.

This sequence belongs to the FapD family.

Its subcellular location is the periplasm. In terms of biological role, probable cysteine protease that is involved in processing fibril precursors. Upon overexpression of the endogenous six-gene locus (fapA-fapF) in situ, cells form large clumps during liquid growth, make large amounts of biofilm and produce amyloid fibrils. Expression of the 6 gene operon in E.coli strain BL21(DE3) induces flocculation and biofilm formation with copious extracellular fibrils. The polypeptide is Probable functional amyloid protease FapD (Pseudomonas fluorescens).